The following is a 659-amino-acid chain: DNA ligase (659 aa).

Residues 31 to 35 (DFVYD), 80 to 81 (SL), and Glu109 contribute to the NAD(+) site. Lys111 acts as the N6-AMP-lysine intermediate in catalysis. Residues Arg132, Glu166, Lys281, and Lys305 each coordinate NAD(+). Zn(2+) contacts are provided by Cys398, Cys401, Cys416, and Cys421. The 79-residue stretch at 581 to 659 (VTTHPFNGKT…EATFKVKINE (79 aa)) folds into the BRCT domain.

This sequence belongs to the NAD-dependent DNA ligase family. LigA subfamily. Requires Mg(2+) as cofactor. Mn(2+) is required as a cofactor.

The catalysed reaction is NAD(+) + (deoxyribonucleotide)n-3'-hydroxyl + 5'-phospho-(deoxyribonucleotide)m = (deoxyribonucleotide)n+m + AMP + beta-nicotinamide D-nucleotide.. Its function is as follows. DNA ligase that catalyzes the formation of phosphodiester linkages between 5'-phosphoryl and 3'-hydroxyl groups in double-stranded DNA using NAD as a coenzyme and as the energy source for the reaction. It is essential for DNA replication and repair of damaged DNA. The sequence is that of DNA ligase from Acholeplasma laidlawii (strain PG-8A).